Here is a 152-residue protein sequence, read N- to C-terminus: MITTAAPDFAAALPNGGRLAGLDVGTKTIGVALCDAGWSFASPDKTIVRKRFSADLDALKALVAGQAVVGLVVGLPLNMDGSDSPRTQSTRAFARNLAPLGLPVLLWDERWSTAAVERAMIAADVSRAKRAERIDSAAAAFILQGAIDAMTR.

Belongs to the YqgF nuclease family.

The protein resides in the cytoplasm. Its function is as follows. Could be a nuclease involved in processing of the 5'-end of pre-16S rRNA. The sequence is that of Putative pre-16S rRNA nuclease from Sphingopyxis alaskensis (strain DSM 13593 / LMG 18877 / RB2256) (Sphingomonas alaskensis).